The following is a 446-amino-acid chain: Amino-acid acetyltransferase (446 aa).

In terms of domain architecture, N-acetyltransferase spans 299-431 (EQVRDAEIDD…SHLPMKKQKL (133 aa)).

Belongs to the acetyltransferase family. ArgA subfamily.

It is found in the cytoplasm. It carries out the reaction L-glutamate + acetyl-CoA = N-acetyl-L-glutamate + CoA + H(+). It functions in the pathway amino-acid biosynthesis; L-arginine biosynthesis; N(2)-acetyl-L-ornithine from L-glutamate: step 1/4. This Aliivibrio fischeri (strain MJ11) (Vibrio fischeri) protein is Amino-acid acetyltransferase.